The sequence spans 313 residues: Small ribosomal subunit protein uS2 (313 aa).

Positions 234 to 243 are enriched in basic and acidic residues; the sequence is DEEAKEEKTK. The segment at 234–313 is disordered; sequence DEEAKEEKTK…ASKAEAEEGK (80 aa). The span at 244 to 256 shows a compositional bias: basic residues; it reads AKTTAKKVVTKKA. Basic and acidic residues predominate over residues 266–297; that stretch reads AEKKSEKPTTEKRPTKEAAETKETSEEPKTKE.

This sequence belongs to the universal ribosomal protein uS2 family.

The sequence is that of Small ribosomal subunit protein uS2 from Coxiella burnetii (strain Dugway 5J108-111).